Here is a 203-residue protein sequence, read N- to C-terminus: Superoxide dismutase [Mn] (203 aa).

Residues His27, His81, Asp164, and His168 each coordinate Mn(2+).

Belongs to the iron/manganese superoxide dismutase family. It depends on Mn(2+) as a cofactor.

The enzyme catalyses 2 superoxide + 2 H(+) = H2O2 + O2. Functionally, destroys superoxide anion radicals which are normally produced within the cells and which are toxic to biological systems. The protein is Superoxide dismutase [Mn] (sodA) of Xanthomonas campestris pv. campestris (strain 8004).